Reading from the N-terminus, the 304-residue chain is Large ribosomal subunit protein uL18y (304 aa).

The protein belongs to the universal ribosomal protein uL18 family. Component of the large ribosomal subunit (LSU).

Its subcellular location is the cytoplasm. It localises to the nucleus. Component of the ribosome, a large ribonucleoprotein complex responsible for the synthesis of proteins in the cell. The small ribosomal subunit (SSU) binds messenger RNAs (mRNAs) and translates the encoded message by selecting cognate aminoacyl-transfer RNA (tRNA) molecules. The large subunit (LSU) contains the ribosomal catalytic site termed the peptidyl transferase center (PTC), which catalyzes the formation of peptide bonds, thereby polymerizing the amino acids delivered by tRNAs into a polypeptide chain. The nascent polypeptides leave the ribosome through a tunnel in the LSU and interact with protein factors that function in enzymatic processing, targeting, and the membrane insertion of nascent chains at the exit of the ribosomal tunnel. This chain is Large ribosomal subunit protein uL18y (RPL5B), found in Oryza sativa subsp. japonica (Rice).